A 514-amino-acid chain; its full sequence is Citrate synthase 2, peroxisomal (514 aa).

Active-site residues include His324, His363, and Asp419.

Belongs to the citrate synthase family. In terms of tissue distribution, widely expressed. Expressed throughout the shoot. Expressed in flower, silique, stem, cauline leaf, young leaf, mature leaf and senescent leaf.

The protein localises to the peroxisome. It catalyses the reaction oxaloacetate + acetyl-CoA + H2O = citrate + CoA + H(+). Its pathway is carbohydrate metabolism; tricarboxylic acid cycle; isocitrate from oxaloacetate: step 1/2. Functionally, peroxisomal citrate synthase required for the fatty acid respiration in seedlings, citrate being exported from peroxisomes into mitochondria during respiration of triacylglycerol (TAG). Indeed, complete respiration requires the transfer of carbon in the form of citrate from the peroxisome to the mitochondria. The sequence is that of Citrate synthase 2, peroxisomal (CSY2) from Arabidopsis thaliana (Mouse-ear cress).